A 220-amino-acid chain; its full sequence is MESLFGRRKTPEEMLRQNQRALNRAMRDLDRERQRLEQQEKKIIADIKKMAKQGQMDAVKIMAKDLVRTRRYVKKFIMMRANIQAVSLKIQTLKSNNSMAQAMKGVTKAMATMNRQLKLPQIQKIMMEFERQSEIMDMKEEMMNDAIDDAMGDEDDEEESDAVVSQVLDELGLTLSDELSNLPATGGSLSVAAGKKAEPQPTLADADADLEERLNNLRRD.

Residues 12 to 53 (EEMLRQNQRALNRAMRDLDRERQRLEQQEKKIIADIKKMAKQ) adopt a coiled-coil conformation. Positions 184-220 (ATGGSLSVAAGKKAEPQPTLADADADLEERLNNLRRD) are disordered. The short motif at 208 to 218 (ADLEERLNNLR) is the MIT-interacting motif element. Basic and acidic residues predominate over residues 211–220 (EERLNNLRRD).

Belongs to the SNF7 family. In terms of assembly, probable core component of the endosomal sorting required for transport complex III (ESCRT-III). ESCRT-III components are thought to multimerize to form a flat lattice on the perimeter membrane of the endosome.

The protein localises to the late endosome membrane. Its subcellular location is the cytoplasm. Its function is as follows. Probable core component of the endosomal sorting required for transport complex III (ESCRT-III) which is involved in multivesicular bodies (MVBs) formation and sorting of endosomal cargo proteins into MVBs. MVBs contain intraluminal vesicles (ILVs) that are generated by invagination and scission from the limiting membrane of the endosome and mostly are delivered to lysosomes enabling degradation of membrane proteins, such as stimulated growth factor receptors, lysosomal enzymes and lipids. The polypeptide is Charged multivesicular body protein 2a (chmp2a) (Danio rerio (Zebrafish)).